We begin with the raw amino-acid sequence, 268 residues long: ClpXP adapter protein SpxH (268 aa).

Belongs to the SpxH family. As to quaternary structure, interacts with Spx.

It localises to the cytoplasm. In terms of biological role, adapter protein required for efficient degradation of Spx by ClpXP under non-stress conditions. Interaction with Spx stabilizes Spx and exposes the C-terminus of Spx for recognition and proteolysis by ClpXP. The sequence is that of ClpXP adapter protein SpxH from Staphylococcus aureus (strain MRSA252).